The following is a 597-amino-acid chain: Elongation factor 4 (597 aa).

The 183-residue stretch at 2-184 folds into the tr-type G domain; that stretch reads KNIRNFSIIA…EIVHKIPAPE (183 aa). GTP contacts are provided by residues 14–19 and 131–134; these read DHGKST and NKID.

This sequence belongs to the TRAFAC class translation factor GTPase superfamily. Classic translation factor GTPase family. LepA subfamily.

It localises to the cell inner membrane. It carries out the reaction GTP + H2O = GDP + phosphate + H(+). Functionally, required for accurate and efficient protein synthesis under certain stress conditions. May act as a fidelity factor of the translation reaction, by catalyzing a one-codon backward translocation of tRNAs on improperly translocated ribosomes. Back-translocation proceeds from a post-translocation (POST) complex to a pre-translocation (PRE) complex, thus giving elongation factor G a second chance to translocate the tRNAs correctly. Binds to ribosomes in a GTP-dependent manner. In Actinobacillus succinogenes (strain ATCC 55618 / DSM 22257 / CCUG 43843 / 130Z), this protein is Elongation factor 4.